The primary structure comprises 85 residues: Beta-insect depressant toxin Lqh-dprIT3f (85 aa).

Residues 1 to 21 (MKLLLLLTISASMLIEGLVNA) form the signal peptide. The 61-residue stretch at 22-82 (DGYIRGGDGC…EWDYETDTCG (61 aa)) folds into the LCN-type CS-alpha/beta domain. 4 disulfides stabilise this stretch: Cys-31/Cys-81, Cys-35/Cys-56, Cys-42/Cys-63, and Cys-46/Cys-65. Position 82 is a glycine amide (Gly-82).

It belongs to the long (4 C-C) scorpion toxin superfamily. Sodium channel inhibitor family. Beta subfamily. As to expression, expressed by the venom gland.

Its subcellular location is the secreted. In terms of biological role, depressant insect beta-toxins cause a transient contraction paralysis followed by a slow flaccid paralysis. They bind voltage-independently at site-4 of sodium channels (Nav) and block action potentials, primarily by depolarizing the axonal membrane and suppressing the sodium current. This depressant toxin is active only on insects. It is found in a relatively small amount in the venom. This chain is Beta-insect depressant toxin Lqh-dprIT3f, found in Leiurus hebraeus (Hebrew deathstalker scorpion).